We begin with the raw amino-acid sequence, 485 residues long: Homeobox protein unplugged (485 aa).

Disordered regions lie at residues 1–65 (MERP…QEQE), 114–157 (PAGH…DTRF), and 212–325 (GMAQ…RRTA). Over residues 54–64 (RDQEQEAEQEQ) the composition is skewed to acidic residues. The span at 114-128 (PAGHPAAQQPQAQAQ) shows a compositional bias: low complexity. Polar residues-rich tracts occupy residues 223–234 (QAHSSPAKSGSH) and 254–267 (DSCSDISLTMSPRN). Residues 284-293 (DSEDCSDDEG) show a composition bias toward acidic residues. Positions 308–317 (SQGNGSSSNS) are enriched in low complexity. The homeobox DNA-binding region spans 319-378 (SRRRRTAFTSEQLLELEREFHAKKYLSLTERSQIATSLKLSEVQVKIWFQNRRAKWKRVK).

In terms of tissue distribution, expressed in the neuroectodermal and mesectodermal cells at the ventral midline of stage 8 embryos, Subsequently, expression domains in the CNS widen and have their most anterior border in the posterior deutocerebrum. Oc/otd and unpg are mutual repressors at the interface of their brain-specific expression domains. Expression fades during germ band retraction and is then restricted to subset of cells by stage 14. Expressed in the founder cells of the cerebral branch within the first tracheal metamere. Outside the CNS, expression is seen in two clusters of ectodermal cells located laterally within the labial and first thoracic segments of stage 9 embryos. By stage 13, the expression is detected in a few cells close to the dorsal midline of the embryos.

The protein localises to the nucleus. Plays a regulatory role in neural branching of the tracheae: segment-specific aspects of these neural branching patterns appear to be generated by homeotic regulation of expression. May have a role with oc/otd in the postembryonic development of the brain. The polypeptide is Homeobox protein unplugged (Drosophila melanogaster (Fruit fly)).